Reading from the N-terminus, the 275-residue chain is 4-deoxy-L-threo-5-hexosulose-uronate ketol-isomerase (275 aa).

Zn(2+) contacts are provided by histidine 193, histidine 195, glutamate 200, and histidine 242.

This sequence belongs to the KduI family. Requires Zn(2+) as cofactor.

The enzyme catalyses 5-dehydro-4-deoxy-D-glucuronate = 3-deoxy-D-glycero-2,5-hexodiulosonate. The protein operates within glycan metabolism; pectin degradation; 2-dehydro-3-deoxy-D-gluconate from pectin: step 4/5. Functionally, catalyzes the isomerization of 5-dehydro-4-deoxy-D-glucuronate to 3-deoxy-D-glycero-2,5-hexodiulosonate. The sequence is that of 4-deoxy-L-threo-5-hexosulose-uronate ketol-isomerase from Bacillus pumilus (strain SAFR-032).